We begin with the raw amino-acid sequence, 277 residues long: Energy-coupling factor transporter ATP-binding protein EcfA (277 aa).

The region spanning 4-238 is the ABC transporter domain; the sequence is LETRDLTHIY…PELLTQTRLD (235 aa). 37-44 is an ATP binding site; that stretch reads GPNGAGKS.

This sequence belongs to the ABC transporter superfamily. Energy-coupling factor EcfA family. Forms a stable energy-coupling factor (ECF) transporter complex composed of 2 membrane-embedded substrate-binding proteins (S component), 2 ATP-binding proteins (A component) and 2 transmembrane proteins (T component).

It localises to the cell membrane. Functionally, ATP-binding (A) component of a common energy-coupling factor (ECF) ABC-transporter complex. Unlike classic ABC transporters this ECF transporter provides the energy necessary to transport a number of different substrates. This chain is Energy-coupling factor transporter ATP-binding protein EcfA, found in Methanoculleus marisnigri (strain ATCC 35101 / DSM 1498 / JR1).